We begin with the raw amino-acid sequence, 533 residues long: GMP synthase [glutamine-hydrolyzing] (533 aa).

A Glutamine amidotransferase type-1 domain is found at 12-206; the sequence is TILVLDFGSQ…AVGICGAEQK (195 aa). Cysteine 88 serves as the catalytic Nucleophile. Residues histidine 180 and glutamate 182 contribute to the active site. Residues 207-408 form the GMPS ATP-PPase domain; the sequence is WTMAEFIGQE…LGISPELVGR (202 aa). Position 235 to 241 (235 to 241) interacts with ATP; that stretch reads SGGVDST. XMP contacts are provided by arginine 308, aspartate 470, lysine 525, and glutamate 531.

In terms of assembly, homodimer. Mg(2+) is required as a cofactor.

The protein localises to the cytoplasm. The protein resides in the cytosol. It catalyses the reaction XMP + L-glutamine + ATP + H2O = GMP + L-glutamate + AMP + diphosphate + 2 H(+). It participates in purine metabolism; GMP biosynthesis; GMP from XMP (L-Gln route): step 1/1. Catalyzes the conversion of xanthine monophosphate (XMP) to GMP in the presence of glutamine and ATP through an adenyl-XMP intermediate. The sequence is that of GMP synthase [glutamine-hydrolyzing] (gua1) from Emericella nidulans (strain FGSC A4 / ATCC 38163 / CBS 112.46 / NRRL 194 / M139) (Aspergillus nidulans).